The chain runs to 240 residues: UDP-2,3-diacylglucosamine hydrolase (240 aa).

Mn(2+)-binding residues include Asp-8, His-10, Asp-41, Asn-79, and His-114. A substrate-binding site is contributed by 79 to 80; the sequence is NR. 5 residues coordinate substrate: Asp-122, Ser-160, Asn-164, Lys-167, and His-195. Mn(2+) is bound by residues His-195 and His-197.

Belongs to the LpxH family. The cofactor is Mn(2+).

Its subcellular location is the cell inner membrane. The protein resides in the cytoplasm. The catalysed reaction is UDP-2-N,3-O-bis[(3R)-3-hydroxytetradecanoyl]-alpha-D-glucosamine + H2O = 2-N,3-O-bis[(3R)-3-hydroxytetradecanoyl]-alpha-D-glucosaminyl 1-phosphate + UMP + 2 H(+). The protein operates within glycolipid biosynthesis; lipid IV(A) biosynthesis; lipid IV(A) from (3R)-3-hydroxytetradecanoyl-[acyl-carrier-protein] and UDP-N-acetyl-alpha-D-glucosamine: step 4/6. With respect to regulation, inhibited by a sulfonyl piperazine compound that shows antibacterial activity against E.coli; LpxH is the cellular target of this compound. Inhibited by 0.01% (or more) Triton X-100 in vitro. In terms of biological role, hydrolyzes the pyrophosphate bond of UDP-2,3-diacylglucosamine to yield 2,3-diacylglucosamine 1-phosphate (lipid X) and UMP by catalyzing the attack of water at the alpha-P atom. Involved in the biosynthesis of lipid A, a phosphorylated glycolipid that anchors the lipopolysaccharide to the outer membrane of the cell. Is essential for E.coli growth. Does not cleave the unacylated UDP-GlcNAc, the mono-acylated UDP-3-O-(R)-3-hydroxymyristoyl-GlcNAc, and CDP-diacylglycerol. This Escherichia coli (strain K12) protein is UDP-2,3-diacylglucosamine hydrolase.